A 79-amino-acid chain; its full sequence is Defensin-like protein 3 (79 aa).

Residues 1–29 (MAKFASIITLLFAALVVFAAFEAPTMVEA) form the signal peptide. Disulfide bonds link C32/C79, C43/C64, C49/C73, and C53/C75.

The protein belongs to the DEFL family.

The protein localises to the secreted. Its function is as follows. Possesses antifungal activity sensitive to inorganic cations. The chain is Defensin-like protein 3 (AFP3) from Brassica napus (Rape).